The chain runs to 201 residues: UPF0301 protein Avi_1069 (201 aa).

The protein belongs to the UPF0301 (AlgH) family.

The sequence is that of UPF0301 protein Avi_1069 from Allorhizobium ampelinum (strain ATCC BAA-846 / DSM 112012 / S4) (Agrobacterium vitis (strain S4)).